A 76-amino-acid chain; its full sequence is Small ribosomal subunit protein uS17 (76 aa).

Belongs to the universal ribosomal protein uS17 family. As to quaternary structure, part of the 30S ribosomal subunit.

In terms of biological role, one of the primary rRNA binding proteins, it binds specifically to the 5'-end of 16S ribosomal RNA. The protein is Small ribosomal subunit protein uS17 of Ruegeria pomeroyi (strain ATCC 700808 / DSM 15171 / DSS-3) (Silicibacter pomeroyi).